The sequence spans 183 residues: ATP synthase subunit delta (183 aa).

Belongs to the ATPase delta chain family. In terms of assembly, F-type ATPases have 2 components, F(1) - the catalytic core - and F(0) - the membrane proton channel. F(1) has five subunits: alpha(3), beta(3), gamma(1), delta(1), epsilon(1). F(0) has three main subunits: a(1), b(2) and c(10-14). The alpha and beta chains form an alternating ring which encloses part of the gamma chain. F(1) is attached to F(0) by a central stalk formed by the gamma and epsilon chains, while a peripheral stalk is formed by the delta and b chains.

The protein localises to the cell inner membrane. Functionally, f(1)F(0) ATP synthase produces ATP from ADP in the presence of a proton or sodium gradient. F-type ATPases consist of two structural domains, F(1) containing the extramembraneous catalytic core and F(0) containing the membrane proton channel, linked together by a central stalk and a peripheral stalk. During catalysis, ATP synthesis in the catalytic domain of F(1) is coupled via a rotary mechanism of the central stalk subunits to proton translocation. Its function is as follows. This protein is part of the stalk that links CF(0) to CF(1). It either transmits conformational changes from CF(0) to CF(1) or is implicated in proton conduction. The sequence is that of ATP synthase subunit delta from Desulforapulum autotrophicum (strain ATCC 43914 / DSM 3382 / VKM B-1955 / HRM2) (Desulfobacterium autotrophicum).